A 218-amino-acid chain; its full sequence is MSERVSEEPGLDKGDRAEECELDDPELKAIRMRVREMEEEAERLKGLSGQDKSIGVSTRPCMQTTHSKMTAGAYTEGPPQPLSAEEKKEIDKRSVYVGNVDYGSTAQDLEAHFSSCGSINRITILCDKFSGHPKGYAYIEFAERNSVDAAVAMDETVFRGRTIKVLPKRTNMPGISSTDRGGFRGRPRGNRGNYQRGQRPRGRPFRGRGRPGPLNNPY.

Disordered stretches follow at residues 1–24 (MSER…ELDD) and 169–218 (RTNM…NNPY). Residues 93-170 (RSVYVGNVDY…RTIKVLPKRT (78 aa)) form the RRM domain. Over residues 198 to 209 (QRPRGRPFRGRG) the composition is skewed to basic residues.

In terms of assembly, homodimer; Upon poly(A) binding, undergoes a dimer-monomer transition that removes the polyproline motif from the RNA recognition site and allows it to be replaced by the adenosine nucleotides of poly(A).

Its subcellular location is the cytoplasm. Its function is as follows. Binds the poly(A) tail of mRNA. Unable to interact with the cap-binding complex and is therefore unlikely to be involved in translation initiation. The sequence is that of Embryonic polyadenylate-binding protein 2-B (Pabpn1l-b) from Xenopus laevis (African clawed frog).